Here is a 1445-residue protein sequence, read N- to C-terminus: Netrin receptor DCC (1445 aa).

A signal peptide spans 1-25 (MENSLGCVWVPKLAFVLFGASLLSA). Ig-like C2-type domains lie at 26–135 (HLQV…AKVM), 139–229 (PLRF…AEVR), 234–326 (PGLH…AELT), and 331–416 (PWFL…AQLI). 2 N-linked (GlcNAc...) asparagine glycosylation sites follow: N60 and N94. Disulfide bonds link C61/C117, C161/C212, and C261/C310. Residues N299 and N318 are each glycosylated (N-linked (GlcNAc...) asparagine). The cysteines at positions 352 and 400 are disulfide-linked. Fibronectin type-III domains lie at 431-524 (APRD…TQPE), 530-620 (PVEN…TLSD), 625-718 (PPQN…TPEN), 728-821 (QPSS…TDPT), 846-942 (PPVG…TYEA), and 947-1044 (APKD…TLKV). N478 carries an N-linked (GlcNAc...) asparagine glycan. N-linked (GlcNAc...) asparagine glycosylation is found at N628 and N702. The chain crosses the membrane as a helical span at residues 1100–1120 (VITVVTVGVLTVLVVVIVAVI). Disordered regions lie at residues 1126–1152 (SAQQ…RPPD) and 1167–1220 (KPAG…MSTL). Positions 1129-1143 (QRKKRATHSASKRKG) are enriched in basic residues. S1178 bears the Phosphoserine; by MAPK1 mark. Polar residues predominate over residues 1179-1220 (PIQSCQDLTPVSHSQSESQMGSKSASHSGQDTEEAGSSMSTL). T1187 is subject to Phosphothreonine; by MAPK1. The residue at position 1267 (S1267) is a Phosphoserine; by MAPK1. Disordered stretches follow at residues 1292 to 1327 (GFGA…APSR) and 1392 to 1417 (LLPV…PASV).

This sequence belongs to the immunoglobulin superfamily. DCC family. In terms of assembly, interacts with the cytoplasmic part of UNC5A, UNC5B and UNC5C. Interacts with DSCAM. Interacts with PTK2/FAK1. Interacts with MYO10. Interacts with MAPK1. Interacts with NTN1. Interacts with CBLN4; this interaction can be competed by NTN1. Interacts with SIAH1 and SIAH2. In terms of processing, ubiquitinated; mediated by SIAH1 or SIAH2 and leading to its subsequent proteasomal degradation. Detected in embryonic spinal cord, predominantly in axons of commissural neurons (at protein level). Detected in embryonic spinal cord.

It localises to the membrane. Its function is as follows. Receptor for netrin required for axon guidance. Mediates axon attraction of neuronal growth cones in the developing nervous system upon ligand binding. Its association with UNC5 proteins may trigger signaling for axon repulsion. It also acts as a dependence receptor required for apoptosis induction when not associated with netrin ligand. Implicated as a tumor suppressor gene. The polypeptide is Netrin receptor DCC (Dcc) (Rattus norvegicus (Rat)).